A 319-amino-acid chain; its full sequence is Pantothenate kinase (319 aa).

97-104 (GSVAVGKS) serves as a coordination point for ATP.

This sequence belongs to the prokaryotic pantothenate kinase family.

The protein resides in the cytoplasm. The enzyme catalyses (R)-pantothenate + ATP = (R)-4'-phosphopantothenate + ADP + H(+). The protein operates within cofactor biosynthesis; coenzyme A biosynthesis; CoA from (R)-pantothenate: step 1/5. The protein is Pantothenate kinase of Chelativorans sp. (strain BNC1).